The sequence spans 117 residues: Immunoglobulin heavy variable 1-58 (117 aa).

Residues 1–19 form the signal peptide; the sequence is MDWIWRILFLVGAATGAHS. Residues 20 to 44 are framework-1; it reads QMQLVQSGPEVKKPGTSVKVSCKAS. The Ig-like domain maps to 20-117; it reads QMQLVQSGPE…EDTAVYYCAA (98 aa). C41 and C115 are oxidised to a cystine. A complementarity-determining-1 region spans residues 45-52; it reads GFTFTSSA. Residues 53-69 form a framework-2 region; that stretch reads VQWVRQARGQRLEWIGW. The interval 70 to 77 is complementarity-determining-2; sequence IVVGSGNT. The interval 78-115 is framework-3; that stretch reads NYAQKFQERVTITRDMSTSTAYMELSSLRSEDTAVYYC. Residues 116-117 are complementarity-determining-3; sequence AA.

Immunoglobulins are composed of two identical heavy chains and two identical light chains; disulfide-linked.

Its subcellular location is the secreted. The protein resides in the cell membrane. Functionally, v region of the variable domain of immunoglobulin heavy chains that participates in the antigen recognition. Immunoglobulins, also known as antibodies, are membrane-bound or secreted glycoproteins produced by B lymphocytes. In the recognition phase of humoral immunity, the membrane-bound immunoglobulins serve as receptors which, upon binding of a specific antigen, trigger the clonal expansion and differentiation of B lymphocytes into immunoglobulins-secreting plasma cells. Secreted immunoglobulins mediate the effector phase of humoral immunity, which results in the elimination of bound antigens. The antigen binding site is formed by the variable domain of one heavy chain, together with that of its associated light chain. Thus, each immunoglobulin has two antigen binding sites with remarkable affinity for a particular antigen. The variable domains are assembled by a process called V-(D)-J rearrangement and can then be subjected to somatic hypermutations which, after exposure to antigen and selection, allow affinity maturation for a particular antigen. This Homo sapiens (Human) protein is Immunoglobulin heavy variable 1-58.